A 593-amino-acid chain; its full sequence is UvrABC system protein C (593 aa).

One can recognise a GIY-YIG domain in the interval Met-17–Ile-94. One can recognise a UVR domain in the interval Lys-199 to Leu-234.

The protein belongs to the UvrC family. In terms of assembly, interacts with UvrB in an incision complex.

It is found in the cytoplasm. Functionally, the UvrABC repair system catalyzes the recognition and processing of DNA lesions. UvrC both incises the 5' and 3' sides of the lesion. The N-terminal half is responsible for the 3' incision and the C-terminal half is responsible for the 5' incision. The sequence is that of UvrABC system protein C from Staphylococcus aureus (strain bovine RF122 / ET3-1).